We begin with the raw amino-acid sequence, 1461 residues long: Phospholipid-transporting ATPase VB (1461 aa).

Residues 1–82 (MALSVDSSWH…TTKYTLFTFL (82 aa)) lie on the Cytoplasmic side of the membrane. The helical transmembrane segment at 83 to 104 (PRNLFEQFHRWANLYFLFLVIL) threads the bilayer. Residues 105–110 (NWMPSM) lie on the Exoplasmic loop side of the membrane. A helical membrane pass occupies residues 111 to 132 (EVFHREITMLPLAIVLFVIMIK). The Cytoplasmic portion of the chain corresponds to 133-316 (DGMEDFKRHR…SKIERRMNID (184 aa)). Residues 317–338 (IFFCIGILILMCLIGAVGHSIW) traverse the membrane as a helical segment. At 339–368 (NGTFEEHPPFDVPDANGSFLPSALGGFYMF) the chain is on the exoplasmic loop side. A helical transmembrane segment spans residues 369 to 390 (LTMIILLQVLIPISLYVSIELV). Topologically, residues 391 to 1111 (KLGQVFFLSN…GHWCYSRLAR (721 aa)) are cytoplasmic. Catalysis depends on Asp-433, which acts as the 4-aspartylphosphate intermediate. Residues Asp-433, Lys-434, and Thr-435 each contribute to the ATP site. Asp-433 provides a ligand contact to Mg(2+). Thr-435 is a binding site for Mg(2+). Polar residues-rich tracts occupy residues 496–511 (MRSQKGAQPLRRSQSA) and 530–539 (SQPPVAFSSS). Disordered regions lie at residues 496-541 (MRSQ…SSIE) and 640-687 (TAPS…MWDQ). Residues Glu-724, Phe-766, Lys-790, Arg-835, Thr-915, Gly-916, Asp-917, Arg-1029, and Lys-1035 each contribute to the ATP site. Mg(2+) is bound at residue Asp-1055. ATP-binding residues include Asn-1058 and Asp-1059. Residue Asp-1059 participates in Mg(2+) binding. The helical transmembrane segment at 1112 to 1132 (MVVYYLYKNVCYVNLLFWYQF) threads the bilayer. At 1133 to 1144 (FCGFSSSTMIDY) the chain is on the exoplasmic loop side. A helical transmembrane segment spans residues 1145 to 1164 (WQMIFFNLFFTSLPPLVFGV). At 1165–1194 (LDKDISAETLLALPELYKSGQNSECYNLST) the chain is on the cytoplasmic side. Residues 1195–1216 (FWISMVDAFYQSLICFFIPYLA) traverse the membrane as a helical segment. Residues 1217 to 1223 (YKGSDID) lie on the Exoplasmic loop side of the membrane. A helical transmembrane segment spans residues 1224–1246 (VFTFGTPINTISLTTILLHQAME). The Cytoplasmic segment spans residues 1247-1252 (MKTWTI). A helical membrane pass occupies residues 1253–1273 (FHGVVLLGSFLMYFLVSLLYN). Topologically, residues 1274–1291 (ATCVICNSPTNPYWVMEG) are exoplasmic loop. A helical transmembrane segment spans residues 1292–1316 (QLSNPTFYLVCFLTPVVALLPRYFF). Topologically, residues 1317–1461 (LSLQGTCGKS…HRRSQSSLTI (145 aa)) are cytoplasmic. Residues 1346-1397 (IQSWRSRQRPAPVPEVARPTHHPVSSITGQDFSASTPKSSNPPKRKHVEESV) form a disordered region. The segment covering 1368 to 1387 (PVSSITGQDFSASTPKSSNP) has biased composition (polar residues).

The protein belongs to the cation transport ATPase (P-type) (TC 3.A.3) family. Type IV subfamily. Component of a P4-ATPase flippase complex which consists of a catalytic alpha subunit ATP10B and an accessory beta subunit TMEM30A. Mg(2+) serves as cofactor. Autophosphorylated at the conserved aspartate of the P-type ATPase signature sequence. In terms of tissue distribution, expressed in predominantly in brain structures including medulla oblongata, substantia nigra and basal ganglia. Expressed in the gastrointestinal system with highest levels in the small intestine and colon. Also expressed at low levels in testis and thymus.

Its subcellular location is the late endosome membrane. It localises to the lysosome membrane. The protein localises to the endoplasmic reticulum membrane. The enzyme catalyses ATP + H2O + phospholipidSide 1 = ADP + phosphate + phospholipidSide 2.. It catalyses the reaction a beta-D-glucosyl-(1&lt;-&gt;1')-N-acylsphing-4-enine(out) + ATP + H2O = a beta-D-glucosyl-(1&lt;-&gt;1')-N-acylsphing-4-enine(in) + ADP + phosphate + H(+). In terms of biological role, catalytic component of a P4-ATPase flippase complex, which catalyzes the hydrolysis of ATP coupled to the transport of glucosylceramide (GlcCer) from the outer to the inner leaflet of lysosome membranes. Plays an important role in the maintenance of lysosome membrane integrity and function in cortical neurons. The polypeptide is Phospholipid-transporting ATPase VB (Homo sapiens (Human)).